Consider the following 137-residue polypeptide: Large-conductance mechanosensitive channel (137 aa).

Transmembrane regions (helical) follow at residues 10 to 30 and 76 to 96; these read FAMR…AAFG and GVFL…FMAI.

It belongs to the MscL family. In terms of assembly, homopentamer.

The protein resides in the cell inner membrane. Channel that opens in response to stretch forces in the membrane lipid bilayer. May participate in the regulation of osmotic pressure changes within the cell. The chain is Large-conductance mechanosensitive channel from Erwinia tasmaniensis (strain DSM 17950 / CFBP 7177 / CIP 109463 / NCPPB 4357 / Et1/99).